Here is a 630-residue protein sequence, read N- to C-terminus: MMTKVGEVLLLLLLPAFVPHTDGTHYSLPGKPTEIKCRSPEKETFTCWWKPGSDGGLPTTYALYYRKEGSDVVHECPDYHTAGKNSCFFNKNNTLIWVSYNITVVATNALGKTYSDPQDIDVVYIVQPHPPEKLEVTVMKDQGWPFLRVSWEPPRKADTRSGWITLIYELRVKLEDEESEWENHAAGQQKMFNIFSLRSGGTYLIQVRCKPDHGFWSEWSSTSYVKVPEYLHREKSVWILVLVFSAFILLLLTWLIHMNSHSLKHCMLPPVPGPKIKGFDKQLLKSGKSDEVFSALVVSDFPPTTSNYEDLLVEYLEVYMPEQQELMVDKGKDHDGCLKSIGSASDSDSGRGSCDSDNLLMDKSGAPKEEQQQQNQEGDQIGKETQGPKEAWEKEAMPCANEDVVSPDASSEKVKTWPSVFSPVTPYSPLDPHNSLEMHKQHCLSNTQFPPGSPSSDHYIKEALQSSYWEVCFNNNQPYPQTEVHPQLQAHSDRNISAVNDRNAPTGLLLPTRMTEYVEVQRVNEENKVLLHPIPSGHSREKACPWVGQRDDYSKVKGVDSDNGLLLQREVVEEESMEMAGAAESCYTSSIAFTTPKQTACSPVALPVQDERVLAVSGYVDTATVFSVHT.

An N-terminal signal peptide occupies residues 1–23; sequence MMTKVGEVLLLLLLPAFVPHTDG. The Extracellular portion of the chain corresponds to 24 to 234; sequence THYSLPGKPT…VKVPEYLHRE (211 aa). 2 Fibronectin type-III domains span residues 31-128 and 130-230; these read KPTE…IVQP and PPEK…VPEY. Cystine bridges form between Cys-37–Cys-47 and Cys-76–Cys-87. N-linked (GlcNAc...) asparagine glycosylation is found at Asn-92 and Asn-101. Residues Asp-212 and His-213 each contribute to the Zn(2+) site. A WSXWS motif motif is present at residues 216–220; it reads WSEWS. Residues 235–258 form a helical membrane-spanning segment; the sequence is KSVWILVLVFSAFILLLLTWLIHM. At 259–630 the chain is on the cytoplasmic side; that stretch reads NSHSLKHCML…DTATVFSVHT (372 aa). A Box 1 motif motif is present at residues 267–275; that stretch reads MLPPVPGPK. The segment at 339-389 is disordered; the sequence is KSIGSASDSDSGRGSCDSDNLLMDKSGAPKEEQQQQNQEGDQIGKETQGPK. Residues 340 to 357 show a composition bias toward low complexity; it reads SIGSASDSDSGRGSCDSD. Over residues 380-389 the composition is skewed to basic and acidic residues; it reads QIGKETQGPK.

Belongs to the type I cytokine receptor family. Type 1 subfamily.

The protein localises to the membrane. Functionally, this is a receptor for the anterior pituitary hormone prolactin. The chain is Prolactin receptor (prlr) from Oreochromis niloticus (Nile tilapia).